A 345-amino-acid polypeptide reads, in one-letter code: Holliday junction branch migration complex subunit RuvB (345 aa).

Positions 4–185 (LDNRFVTPLS…FGVLCPMEFY (182 aa)) are large ATPase domain (RuvB-L). Residues Leu-24, Arg-25, Gly-66, Lys-69, Thr-70, Thr-71, 132-134 (EDY), Arg-175, Tyr-185, and Arg-222 each bind ATP. Mg(2+) is bound at residue Thr-70. A small ATPAse domain (RuvB-S) region spans residues 186-256 (NEEELKDIIV…MTNKALNLLE (71 aa)). The head domain (RuvB-H) stretch occupies residues 259–345 (KEGFDSIDTK…ENINQYKFKI (87 aa)). 2 residues coordinate DNA: Arg-314 and Arg-319.

Belongs to the RuvB family. In terms of assembly, homohexamer. Forms an RuvA(8)-RuvB(12)-Holliday junction (HJ) complex. HJ DNA is sandwiched between 2 RuvA tetramers; dsDNA enters through RuvA and exits via RuvB. An RuvB hexamer assembles on each DNA strand where it exits the tetramer. Each RuvB hexamer is contacted by two RuvA subunits (via domain III) on 2 adjacent RuvB subunits; this complex drives branch migration. In the full resolvosome a probable DNA-RuvA(4)-RuvB(12)-RuvC(2) complex forms which resolves the HJ.

The protein resides in the cytoplasm. It carries out the reaction ATP + H2O = ADP + phosphate + H(+). In terms of biological role, the RuvA-RuvB-RuvC complex processes Holliday junction (HJ) DNA during genetic recombination and DNA repair, while the RuvA-RuvB complex plays an important role in the rescue of blocked DNA replication forks via replication fork reversal (RFR). RuvA specifically binds to HJ cruciform DNA, conferring on it an open structure. The RuvB hexamer acts as an ATP-dependent pump, pulling dsDNA into and through the RuvAB complex. RuvB forms 2 homohexamers on either side of HJ DNA bound by 1 or 2 RuvA tetramers; 4 subunits per hexamer contact DNA at a time. Coordinated motions by a converter formed by DNA-disengaged RuvB subunits stimulates ATP hydrolysis and nucleotide exchange. Immobilization of the converter enables RuvB to convert the ATP-contained energy into a lever motion, pulling 2 nucleotides of DNA out of the RuvA tetramer per ATP hydrolyzed, thus driving DNA branch migration. The RuvB motors rotate together with the DNA substrate, which together with the progressing nucleotide cycle form the mechanistic basis for DNA recombination by continuous HJ branch migration. Branch migration allows RuvC to scan DNA until it finds its consensus sequence, where it cleaves and resolves cruciform DNA. This Clostridium tetani (strain Massachusetts / E88) protein is Holliday junction branch migration complex subunit RuvB.